A 137-amino-acid chain; its full sequence is Crustacean calcium-binding protein 23 (137 aa).

EF-hand domains follow at residues 27 to 48, 62 to 97, and 100 to 135; these read RDSS…FGLD, EKKA…KVVK, and ATEE…YSGL.

In terms of assembly, monomer or disulfide-linked dimers.

Possibly acts as a regulatory protein and not as a calcium buffer or transport protein. The protein is Crustacean calcium-binding protein 23 of Homarus americanus (American lobster).